The chain runs to 307 residues: Serine/threonine-protein phosphatase 4 catalytic subunit (307 aa).

The Mn(2+) site is built by aspartate 54, histidine 56, aspartate 82, and asparagine 114. Histidine 115 (proton donor) is an active-site residue. 2 residues coordinate Mn(2+): histidine 164 and histidine 238. Leucine methyl ester is present on leucine 307.

The protein belongs to the PPP phosphatase family. PP-4 (PP-X) subfamily. As to quaternary structure, serine/threonine-protein phosphatase 4 (PP4) occurs in different assemblies of the catalytic and one or more regulatory subunits. Probably part of a PP4 PPP4C-PPP4R2-PPP4R3 complex containing Pp4-19C, PPP4R2r and flfl. Interacts with Ptpa; thereby mediating basal localization of the Miranda (Mira) complex; probably by dephosphorylation of Mira. The cofactor is Mn(2+). In terms of processing, reversibly methyl esterified on Leu-307 by leucine carboxyl methyltransferase 1 (LCMT1) and protein phosphatase methylesterase 1 (PPME1). Carboxyl methylation influences the affinity of the catalytic subunit for the different regulatory subunits, thereby modulating the PP2A holoenzyme's substrate specificity, enzyme activity and cellular localization.

It is found in the cytoplasm. It localises to the nucleus. The protein resides in the cytoskeleton. Its subcellular location is the microtubule organizing center. The protein localises to the centrosome. It catalyses the reaction O-phospho-L-seryl-[protein] + H2O = L-seryl-[protein] + phosphate. The catalysed reaction is O-phospho-L-threonyl-[protein] + H2O = L-threonyl-[protein] + phosphate. Functionally, protein phosphatase that regulates many processes such as microtubule organization at centrosomes. The probable PP4 complex Pp4-19C-PPP4R2r-flfl (PPP4C-PPP4R2-PPP4R3) is required to prevent caspase-induced cell death (in vitro). This Drosophila melanogaster (Fruit fly) protein is Serine/threonine-protein phosphatase 4 catalytic subunit (Pp4-19C).